Consider the following 540-residue polypeptide: Chaperonin GroEL (540 aa).

Residues 29-32 (TLGP), 86-90 (DGTTT), glycine 413, 476-478 (NAA), and aspartate 492 each bind ATP.

This sequence belongs to the chaperonin (HSP60) family. In terms of assembly, forms a cylinder of 14 subunits composed of two heptameric rings stacked back-to-back. Interacts with the co-chaperonin GroES.

It is found in the cytoplasm. The enzyme catalyses ATP + H2O + a folded polypeptide = ADP + phosphate + an unfolded polypeptide.. Functionally, together with its co-chaperonin GroES, plays an essential role in assisting protein folding. The GroEL-GroES system forms a nano-cage that allows encapsulation of the non-native substrate proteins and provides a physical environment optimized to promote and accelerate protein folding. This is Chaperonin GroEL from Streptococcus constellatus.